Reading from the N-terminus, the 299-residue chain is Caspase-1 (299 aa).

Residues 1–28 (MLDGKQDNGNVDSVDIKQRTNGGGDEGD) constitute a propeptide that is removed on maturation. The segment at 1–45 (MLDGKQDNGNVDSVDIKQRTNGGGDEGDALGSNSSSQPNRVARMP) is disordered. Catalysis depends on residues H136 and C178. The propeptide occupies 185 to 195 (GGITLSRTETD).

It belongs to the peptidase C14A family. As to quaternary structure, heterotetramer that consists of two anti-parallel arranged heterodimers, each one formed by a 19/18 kDa (p19/18) and a 12 kDa (p12) subunit. Post-translationally, the two subunits are derived from the precursor sequence by an autocatalytic mechanism.

Functionally, involved in the activation cascade of caspases responsible for apoptosis execution. Inhibited by the baculovirus anti-apoptotic protein p35. Cleaves p35 and nuclear immunophilin FKBP46. The chain is Caspase-1 from Spodoptera frugiperda (Fall armyworm).